A 449-amino-acid polypeptide reads, in one-letter code: Glucose-6-phosphate isomerase (449 aa).

The active-site Proton donor is Glu291. Catalysis depends on residues His312 and Lys426.

Belongs to the GPI family.

It localises to the cytoplasm. The enzyme catalyses alpha-D-glucose 6-phosphate = beta-D-fructose 6-phosphate. The protein operates within carbohydrate biosynthesis; gluconeogenesis. It functions in the pathway carbohydrate degradation; glycolysis; D-glyceraldehyde 3-phosphate and glycerone phosphate from D-glucose: step 2/4. Its function is as follows. Catalyzes the reversible isomerization of glucose-6-phosphate to fructose-6-phosphate. This chain is Glucose-6-phosphate isomerase, found in Clostridium botulinum (strain Alaska E43 / Type E3).